Consider the following 382-residue polypeptide: Queuine tRNA-ribosyltransferase (382 aa).

Aspartate 93 functions as the Proton acceptor in the catalytic mechanism. Substrate-binding positions include 93–97 (DSGGF), aspartate 147, glutamine 191, and glycine 218. Positions 249–255 (GVGKPED) are RNA binding. Aspartate 268 functions as the Nucleophile in the catalytic mechanism. The tract at residues 273–277 (TRNAR) is RNA binding; important for wobble base 34 recognition. The Zn(2+) site is built by cysteine 306, cysteine 308, cysteine 311, and histidine 337.

This sequence belongs to the queuine tRNA-ribosyltransferase family. Homodimer. Within each dimer, one monomer is responsible for RNA recognition and catalysis, while the other monomer binds to the replacement base PreQ1. Zn(2+) serves as cofactor.

It carries out the reaction 7-aminomethyl-7-carbaguanine + guanosine(34) in tRNA = 7-aminomethyl-7-carbaguanosine(34) in tRNA + guanine. The protein operates within tRNA modification; tRNA-queuosine biosynthesis. Catalyzes the base-exchange of a guanine (G) residue with the queuine precursor 7-aminomethyl-7-deazaguanine (PreQ1) at position 34 (anticodon wobble position) in tRNAs with GU(N) anticodons (tRNA-Asp, -Asn, -His and -Tyr). Catalysis occurs through a double-displacement mechanism. The nucleophile active site attacks the C1' of nucleotide 34 to detach the guanine base from the RNA, forming a covalent enzyme-RNA intermediate. The proton acceptor active site deprotonates the incoming PreQ1, allowing a nucleophilic attack on the C1' of the ribose to form the product. After dissociation, two additional enzymatic reactions on the tRNA convert PreQ1 to queuine (Q), resulting in the hypermodified nucleoside queuosine (7-(((4,5-cis-dihydroxy-2-cyclopenten-1-yl)amino)methyl)-7-deazaguanosine). The chain is Queuine tRNA-ribosyltransferase from Haemophilus influenzae (strain 86-028NP).